Reading from the N-terminus, the 333-residue chain is Glycerol-3-phosphate dehydrogenase [NAD(P)+] (333 aa).

The NADPH site is built by serine 10, tryptophan 11, histidine 31, arginine 32, and lysine 105. Lysine 105, glycine 136, and serine 138 together coordinate sn-glycerol 3-phosphate. Alanine 140 lines the NADPH pocket. Sn-glycerol 3-phosphate contacts are provided by lysine 191, aspartate 244, serine 254, arginine 255, and asparagine 256. Residue lysine 191 is the Proton acceptor of the active site. NADPH is bound at residue arginine 255. 2 residues coordinate NADPH: isoleucine 279 and glutamate 281.

Belongs to the NAD-dependent glycerol-3-phosphate dehydrogenase family.

Its subcellular location is the cytoplasm. The enzyme catalyses sn-glycerol 3-phosphate + NAD(+) = dihydroxyacetone phosphate + NADH + H(+). It catalyses the reaction sn-glycerol 3-phosphate + NADP(+) = dihydroxyacetone phosphate + NADPH + H(+). It functions in the pathway membrane lipid metabolism; glycerophospholipid metabolism. Its function is as follows. Catalyzes the reduction of the glycolytic intermediate dihydroxyacetone phosphate (DHAP) to sn-glycerol 3-phosphate (G3P), the key precursor for phospholipid synthesis. The protein is Glycerol-3-phosphate dehydrogenase [NAD(P)+] of Chlorobium luteolum (strain DSM 273 / BCRC 81028 / 2530) (Pelodictyon luteolum).